The chain runs to 219 residues: Proteasome subunit beta 2 (219 aa).

A propeptide spans 1-25 (MAEWIAGGLEGPAGRGLDERVVRSG) (removed in mature form; by autocatalysis). T26 (nucleophile) is an active-site residue.

This sequence belongs to the peptidase T1B family. As to quaternary structure, the 20S proteasome core is composed of 14 alpha and 14 beta subunits that assemble into four stacked heptameric rings, resulting in a barrel-shaped structure. The two inner rings, each composed of seven catalytic beta subunits, are sandwiched by two outer rings, each composed of seven alpha subunits. The catalytic chamber with the active sites is on the inside of the barrel. Has a gated structure, the ends of the cylinder being occluded by the N-termini of the alpha-subunits. Is capped at one or both ends by the proteasome regulatory ATPase, PAN.

Its subcellular location is the cytoplasm. The enzyme catalyses Cleavage of peptide bonds with very broad specificity.. With respect to regulation, the formation of the proteasomal ATPase PAN-20S proteasome complex, via the docking of the C-termini of PAN into the intersubunit pockets in the alpha-rings, triggers opening of the gate for substrate entry. Interconversion between the open-gate and close-gate conformations leads to a dynamic regulation of the 20S proteasome proteolysis activity. Component of the proteasome core, a large protease complex with broad specificity involved in protein degradation. The sequence is that of Proteasome subunit beta 2 from Aeropyrum pernix (strain ATCC 700893 / DSM 11879 / JCM 9820 / NBRC 100138 / K1).